The chain runs to 385 residues: 1-deoxy-D-xylulose 5-phosphate reductoisomerase (385 aa).

NADPH contacts are provided by threonine 10, glycine 11, serine 12, isoleucine 13, lysine 37, and asparagine 124. Residue lysine 125 participates in 1-deoxy-D-xylulose 5-phosphate binding. Glutamate 126 lines the NADPH pocket. Position 150 (aspartate 150) interacts with Mn(2+). The 1-deoxy-D-xylulose 5-phosphate site is built by serine 151, glutamate 152, serine 176, and histidine 199. Glutamate 152 is a Mn(2+) binding site. NADPH is bound at residue glycine 205. The 1-deoxy-D-xylulose 5-phosphate site is built by serine 212, asparagine 217, lysine 218, and glutamate 221. Glutamate 221 lines the Mn(2+) pocket.

The protein belongs to the DXR family. Requires Mg(2+) as cofactor. Mn(2+) serves as cofactor.

The catalysed reaction is 2-C-methyl-D-erythritol 4-phosphate + NADP(+) = 1-deoxy-D-xylulose 5-phosphate + NADPH + H(+). It functions in the pathway isoprenoid biosynthesis; isopentenyl diphosphate biosynthesis via DXP pathway; isopentenyl diphosphate from 1-deoxy-D-xylulose 5-phosphate: step 1/6. Catalyzes the NADPH-dependent rearrangement and reduction of 1-deoxy-D-xylulose-5-phosphate (DXP) to 2-C-methyl-D-erythritol 4-phosphate (MEP). The polypeptide is 1-deoxy-D-xylulose 5-phosphate reductoisomerase (Clostridium botulinum (strain Langeland / NCTC 10281 / Type F)).